We begin with the raw amino-acid sequence, 356 residues long: Sorbitol dehydrogenase (356 aa).

Cys-44 contacts Zn(2+). Tyr-50 contacts substrate. Positions 69 and 70 each coordinate Zn(2+). Position 155 (Glu-155) interacts with substrate. 3 residues coordinate NAD(+): Ile-183, Asp-203, and Arg-208. 2 positions are modified to phosphoserine: Ser-210 and Ser-224. Residues 272 to 274 (VGL) and 296 to 298 (VFR) contribute to the NAD(+) site. Substrate is bound by residues Arg-298 and Tyr-299.

It belongs to the zinc-containing alcohol dehydrogenase family. Homotetramer. The cofactor is Zn(2+). As to expression, expressed in lens.

It localises to the mitochondrion membrane. The protein localises to the cell projection. The protein resides in the cilium. It is found in the flagellum. The enzyme catalyses xylitol + NAD(+) = D-xylulose + NADH + H(+). It carries out the reaction keto-D-fructose + NADH + H(+) = D-sorbitol + NAD(+). It catalyses the reaction L-iditol + NAD(+) = keto-L-sorbose + NADH + H(+). Inhibited in vitro by metal chelators such as EDTA and 1,10-phenanthroline. Functionally, polyol dehydrogenase that catalyzes the reversible NAD(+)-dependent oxidation of various sugar alcohols. Is mostly active with xylitol, D-sorbitol (D-glucitol) and L-iditol as substrates, leading to the C2-oxidized products D-xylulose, D-fructose and L-sorbose, respectively. Is a key enzyme in the polyol pathway that interconverts glucose and fructose via sorbitol, which constitutes an important alternate route for glucose metabolism. May play a role in sperm motility by using sorbitol as an alternative energy source for sperm motility. Cannot use NADP(+) as the electron acceptor. Has no activity on ethanol, methanol, glycerol, galactitol and fructose 6-phosphate. This Bos taurus (Bovine) protein is Sorbitol dehydrogenase (SORD).